Consider the following 250-residue polypeptide: mRNA-decapping protein g5R (250 aa).

The Nudix hydrolase domain occupies 97 to 239 (QKFRKNWLLP…NLEPMIGPAF (143 aa)). A Nudix box motif is present at residues 132–153 (GKPKEDESDLTCAIREFEEETG). E138 serves as a coordination point for Mg(2+). Catalysis depends on E147, which acts as the Nucleophile. 2 residues coordinate Mg(2+): E151 and D173.

Belongs to the Nudix hydrolase family. DIPP subfamily. In terms of assembly, interacts with host RPL23A. Mg(2+) serves as cofactor. Requires Mn(2+) as cofactor.

It is found in the host rough endoplasmic reticulum. The enzyme catalyses diphospho-myo-inositol polyphosphate + H2O = myo-inositol polyphosphate + phosphate.. In terms of biological role, decapping enzyme required for the removal of the 5'-end m7GpppN cap tethered to viral and host mRNAs to allow their decay in cells. May therefore accelerate viral and cellular mRNA turnover to eliminate competing host mRNAs and allow stage-specific synthesis of viral proteins. Acceleration of the turnover of cellular transcripts may even promote the shutoff of host protein synthesis. In addition to the mRNA cap, g5R also efficiently hydrolyzes diphosphoinositol polyphosphates. Down-regulation of the level of PP-InsP5 (diphosphoinositol pentakisphosphate) may play a role in viral manipulation of the cellular secretory pathway, a step necessary for the formation of virions. Binds viral and cellular poly(A) mRNAs, thereby decreasing both types of mRNAs. This Ornithodoros (relapsing fever ticks) protein is mRNA-decapping protein g5R.